Here is a 127-residue protein sequence, read N- to C-terminus: Small ribosomal subunit protein uS11 (127 aa).

This sequence belongs to the universal ribosomal protein uS11 family. In terms of assembly, part of the 30S ribosomal subunit. Interacts with proteins S7 and S18. Binds to IF-3.

Its function is as follows. Located on the platform of the 30S subunit, it bridges several disparate RNA helices of the 16S rRNA. Forms part of the Shine-Dalgarno cleft in the 70S ribosome. This Streptococcus agalactiae serotype Ia (strain ATCC 27591 / A909 / CDC SS700) protein is Small ribosomal subunit protein uS11.